Here is a 266-residue protein sequence, read N- to C-terminus: MRLIPLKDTAQVGKWAARHIVQRINAFKPTAERPFVLGLPTGGTPLEAYKHLIAMHKAGEVSFKHVVTFNMDEYVGLPQEHPESYHTFMYRNFFDHVDIPSENINLLNGNAPDVDAECRQYEAKIKSYGKINLFMGGVGIDGHIAFNEPASSLASRTRIKTLTEDTRIANSRFFGGDVSLVPKFALTVGVGTLLDAEEVMILVTGHAKAQALEAAVEGNINHMWTISCLQLHAKAVVVCDEPSTMELKVKTVKYFRELEAESVKSL.

Catalysis depends on aspartate 72, which acts as the Proton acceptor; for enolization step. The active-site For ring-opening step is aspartate 141. The active-site Proton acceptor; for ring-opening step is histidine 143. Glutamate 148 serves as the catalytic For ring-opening step.

Belongs to the glucosamine/galactosamine-6-phosphate isomerase family. NagB subfamily. Homohexamer.

The catalysed reaction is alpha-D-glucosamine 6-phosphate + H2O = beta-D-fructose 6-phosphate + NH4(+). It participates in amino-sugar metabolism; N-acetylneuraminate degradation; D-fructose 6-phosphate from N-acetylneuraminate: step 5/5. Allosterically activated by N-acetylglucosamine 6-phosphate (GlcNAc6P). Catalyzes the reversible isomerization-deamination of glucosamine 6-phosphate (GlcN6P) to form fructose 6-phosphate (Fru6P) and ammonium ion. The sequence is that of Glucosamine-6-phosphate deaminase from Serratia proteamaculans (strain 568).